The sequence spans 399 residues: Serpin-Z1B (399 aa).

The tract at residues 344–368 is RCL; it reads GTEAAASTAIKMVPQQARPPSVMDF.

Belongs to the serpin family.

In terms of biological role, inhibits chymotrypsin and cathepsin G in vitro. The protein is Serpin-Z1B of Triticum aestivum (Wheat).